We begin with the raw amino-acid sequence, 523 residues long: Translation initiation factor eIF2B subunit delta (523 aa).

A disordered region spans residues 1 to 147 (MAAVAVAVRE…PSGVKRLPEY (147 aa)). A2 is modified (N-acetylalanine). Phosphoserine is present on S12. Over residues 30 to 40 (EMTKEEKLQLR) the composition is skewed to basic and acidic residues. Over residues 41–51 (KEKKQQKKKRK) the composition is skewed to basic residues. The residue at position 86 (T86) is a Phosphothreonine. The segment covering 87–121 (PREKVPAGRSKAELRAERRAKQEAERALKQARKGE) has biased composition (basic and acidic residues). The residue at position 130 (S130) is a Phosphoserine. The tract at residues 170–179 (RKDYGSKVSL) is may bind the chemical integrated stress response (ISR) inhibitor ISRIB.

Belongs to the eIF-2B alpha/beta/delta subunits family. As to quaternary structure, component of the translation initiation factor 2B (eIF2B) complex which is a heterodecamer of two sets of five different subunits: alpha, beta, gamma, delta and epsilon. Subunits alpha, beta and delta comprise a regulatory subcomplex and subunits epsilon and gamma comprise a catalytic subcomplex. Within the complex, the hexameric regulatory complex resides at the center, with the two heterodimeric catalytic subcomplexes bound on opposite sides.

The protein localises to the cytoplasm. The protein resides in the cytosol. With respect to regulation, activated by the chemical integrated stress response (ISR) inhibitor ISRIB which stimulates guanine nucleotide exchange factor activity for both phosphorylated and unphosphorylated eIF2. Its function is as follows. Acts as a component of the translation initiation factor 2B (eIF2B) complex, which catalyzes the exchange of GDP for GTP on eukaryotic initiation factor 2 (eIF2) gamma subunit. Its guanine nucleotide exchange factor activity is repressed when bound to eIF2 complex phosphorylated on the alpha subunit, thereby limiting the amount of methionyl-initiator methionine tRNA available to the ribosome and consequently global translation is repressed. This Homo sapiens (Human) protein is Translation initiation factor eIF2B subunit delta (EIF2B4).